Here is a 299-residue protein sequence, read N- to C-terminus: Coenzyme PQQ synthesis protein B (299 aa).

This sequence belongs to the PqqB family.

It participates in cofactor biosynthesis; pyrroloquinoline quinone biosynthesis. In terms of biological role, may be involved in the transport of PQQ or its precursor to the periplasm. The polypeptide is Coenzyme PQQ synthesis protein B (Methylorubrum populi (strain ATCC BAA-705 / NCIMB 13946 / BJ001) (Methylobacterium populi)).